An 839-amino-acid polypeptide reads, in one-letter code: Homeobox-leucine zipper protein HOX10 (839 aa).

2 disordered regions span residues 1-24 (MAAA…SGMD) and 132-157 (QNTP…RDAS). A DNA-binding region (homeobox) is located at residues 24–87 (DSGKYVRYTP…NRRCRDKQRK (64 aa)). Positions 91–134 (RLQAVNRKLTAMNKLLMEENERLQKQVSQLVHENAHMRQQLQNT) form a coiled coil. An START domain is found at 155 to 383 (DASNPSGLLS…IAQETSGEVV (229 aa)).

This sequence belongs to the HD-ZIP homeobox family. Class III subfamily. Expressed in stems, leaf sheaths and blades and panicles.

Its subcellular location is the nucleus. Probable transcription factor. This is Homeobox-leucine zipper protein HOX10 (HOX10) from Oryza sativa subsp. japonica (Rice).